The chain runs to 445 residues: Phosphoglucosamine mutase (445 aa).

S102 serves as the catalytic Phosphoserine intermediate. S102, D241, D243, and D245 together coordinate Mg(2+). S102 bears the Phosphoserine mark.

The protein belongs to the phosphohexose mutase family. It depends on Mg(2+) as a cofactor. Post-translationally, activated by phosphorylation.

It catalyses the reaction alpha-D-glucosamine 1-phosphate = D-glucosamine 6-phosphate. Catalyzes the conversion of glucosamine-6-phosphate to glucosamine-1-phosphate. This is Phosphoglucosamine mutase from Shewanella sp. (strain W3-18-1).